We begin with the raw amino-acid sequence, 51 residues long: ATP synthase F(1) complex subunit epsilon, mitochondrial (51 aa).

N6-acetyllysine; alternate occurs at positions 21, 32, and 37. Lys21, Lys32, and Lys37 each carry N6-succinyllysine; alternate. Lys44 carries the N6-acetyllysine modification.

Belongs to the eukaryotic ATPase epsilon family. As to quaternary structure, component of the ATP synthase complex composed at least of ATP5F1A/subunit alpha, ATP5F1B/subunit beta, ATP5MC1/subunit c (homooctomer), MT-ATP6/subunit a, MT-ATP8/subunit 8, ATP5ME/subunit e, ATP5MF/subunit f, ATP5MG/subunit g, ATP5MK/subunit k, ATP5MJ/subunit j, ATP5F1C/subunit gamma, ATP5F1D/subunit delta, ATP5F1E/subunit epsilon, ATP5PF/subunit F6, ATP5PB/subunit b, ATP5PD/subunit d, ATP5PO/subunit OSCP. ATP synthase complex consists of a soluble F(1) head domain (subunits alpha(3) and beta(3)) - the catalytic core - and a membrane F(0) domain - the membrane proton channel (subunits c, a, 8, e, f, g, k and j). These two domains are linked by a central stalk (subunits gamma, delta, and epsilon) rotating inside the F1 region and a stationary peripheral stalk (subunits F6, b, d, and OSCP).

The protein localises to the mitochondrion. It localises to the mitochondrion inner membrane. Its function is as follows. Subunit epsilon, of the mitochondrial membrane ATP synthase complex (F(1)F(0) ATP synthase or Complex V) that produces ATP from ADP in the presence of a proton gradient across the membrane which is generated by electron transport complexes of the respiratory chain. ATP synthase complex consist of a soluble F(1) head domain - the catalytic core - and a membrane F(1) domain - the membrane proton channel. These two domains are linked by a central stalk rotating inside the F(1) region and a stationary peripheral stalk. During catalysis, ATP synthesis in the catalytic domain of F(1) is coupled via a rotary mechanism of the central stalk subunits to proton translocation. In vivo, can only synthesize ATP although its ATP hydrolase activity can be activated artificially in vitro. May be essential for the assembly of F(1) and may play an important role in the incorporation of the hydrophobic subunit c into the F(1)-c oligomer rotor of the mitochondrial ATP synthase complex. The polypeptide is ATP synthase F(1) complex subunit epsilon, mitochondrial (Rattus norvegicus (Rat)).